The following is a 306-amino-acid chain: Ribonuclease BN (306 aa).

Zn(2+) contacts are provided by histidine 64, histidine 66, aspartate 68, histidine 69, histidine 141, aspartate 212, and histidine 270. The Proton acceptor role is filled by aspartate 68.

It belongs to the RNase Z family. RNase BN subfamily. In terms of assembly, homodimer. It depends on Zn(2+) as a cofactor.

Functionally, zinc phosphodiesterase, which has both exoribonuclease and endoribonuclease activities. The polypeptide is Ribonuclease BN (Klebsiella pneumoniae (strain 342)).